We begin with the raw amino-acid sequence, 469 residues long: 3-isopropylmalate dehydratase large subunit (469 aa).

The [4Fe-4S] cluster site is built by cysteine 347, cysteine 410, and cysteine 413.

The protein belongs to the aconitase/IPM isomerase family. LeuC type 1 subfamily. Heterodimer of LeuC and LeuD. It depends on [4Fe-4S] cluster as a cofactor.

The enzyme catalyses (2R,3S)-3-isopropylmalate = (2S)-2-isopropylmalate. The protein operates within amino-acid biosynthesis; L-leucine biosynthesis; L-leucine from 3-methyl-2-oxobutanoate: step 2/4. Functionally, catalyzes the isomerization between 2-isopropylmalate and 3-isopropylmalate, via the formation of 2-isopropylmaleate. In Burkholderia pseudomallei (strain 1106a), this protein is 3-isopropylmalate dehydratase large subunit.